Consider the following 287-residue polypeptide: Elongation factor Ts (287 aa).

The tract at residues 77 to 80 (TDFV) is involved in Mg(2+) ion dislocation from EF-Tu.

The protein belongs to the EF-Ts family.

The protein resides in the cytoplasm. In terms of biological role, associates with the EF-Tu.GDP complex and induces the exchange of GDP to GTP. It remains bound to the aminoacyl-tRNA.EF-Tu.GTP complex up to the GTP hydrolysis stage on the ribosome. The protein is Elongation factor Ts of Wolbachia sp. subsp. Brugia malayi (strain TRS).